A 283-amino-acid chain; its full sequence is Nucleotide-binding protein Sama_3091 (283 aa).

Gly-8–Ser-15 is an ATP binding site. Asp-56 to Asn-59 contacts GTP.

Belongs to the RapZ-like family.

Functionally, displays ATPase and GTPase activities. The sequence is that of Nucleotide-binding protein Sama_3091 from Shewanella amazonensis (strain ATCC BAA-1098 / SB2B).